A 166-amino-acid chain; its full sequence is Succinate dehydrogenase assembly factor 2, mitochondrial (166 aa).

A mitochondrion-targeting transit peptide spans Met-1 to Thr-29.

The protein belongs to the SDHAF2 family. As to quaternary structure, interacts with SDHA within the SDH catalytic dimer.

It is found in the mitochondrion matrix. In terms of biological role, plays an essential role in the assembly of succinate dehydrogenase (SDH), an enzyme complex (also referred to as respiratory complex II) that is a component of both the tricarboxylic acid (TCA) cycle and the mitochondrial electron transport chain, and which couples the oxidation of succinate to fumarate with the reduction of ubiquinone (coenzyme Q) to ubiquinol. Required for flavinylation (covalent attachment of FAD) of the flavoprotein subunit SDHA of the SDH catalytic dimer. This is Succinate dehydrogenase assembly factor 2, mitochondrial from Bos taurus (Bovine).